The primary structure comprises 31 residues: Protamine PTP4 (31 aa).

Residues 1 to 31 (MPRRRRASRRIRRRRRPRVSRRRRGGRRRRR) are disordered.

As to expression, testis.

The protein resides in the nucleus. It localises to the chromosome. Protamines substitute for histones in the chromatin of sperm during the haploid phase of spermatogenesis. They compact sperm DNA into a highly condensed, stable and inactive complex. This is Protamine PTP4 from Oncorhynchus mykiss (Rainbow trout).